A 1609-amino-acid chain; its full sequence is Chitin synthase 5 (1609 aa).

3 disordered regions span residues 1-188, 248-280, and 294-320; these read MNPF…DRER, SGLGVTGPTNVPPGGLGRAPPLRRGKSLLGRDE, and VSLRRKQSKSGNKPSKEVPRDLGESKT. Residues 1–326 lie on the Cytoplasmic side of the membrane; the sequence is MNPFESLPDA…ESKTSRIAPG (326 aa). Polar residues predominate over residues 34–44; it reads PGSTGRPQNPI. Residues 61 to 82 are compositionally biased toward low complexity; the sequence is PQQQQQQQQQQQQQQQRSQQPF. Positions 100–111 are enriched in polar residues; that stretch reads AYLNSTSSQPTQ. Residues 134 to 146 are compositionally biased toward basic and acidic residues; sequence DSVKSYGDDKRSI. Polar residues predominate over residues 147–163; sequence NDPNSSSTALTQVNSLD. Over residues 253–267 the composition is skewed to low complexity; it reads TGPTNVPPGGLGRAP. Residues 307-320 are compositionally biased toward basic and acidic residues; the sequence is PSKEVPRDLGESKT. Residues 327 to 347 traverse the membrane as a helical segment; that stretch reads PVGGWMIYCYILTICCPGPFL. Topologically, residues 348 to 364 are extracellular; sequence RIFGIRTPEQQRAWREK. The helical transmembrane segment at 365 to 385 threads the bilayer; that stretch reads MGLIGIITLIMAAVGFLTFGF. Over 386 to 624 the chain is Cytoplasmic; sequence TQTVCGQQPD…ASKVELYLSL (239 aa). A helical transmembrane segment spans residues 625–645; it reads VFIIGVVAIKFFMAVMFGWFI. Residues 646 to 1176 are Extracellular-facing; it reads SWRLGNYANE…MRFVVFMELT (531 aa). Asn-654 is a glycosylation site (N-linked (GlcNAc...) asparagine). Residues 729-767 form a disordered region; it reads GVASPLGGSPPGSPSVAGGRSSASLAPAHSRRSSFSGSP. The span at 742–752 shows a compositional bias: low complexity; that stretch reads PSVAGGRSSAS. Asn-1015 and Asn-1144 each carry an N-linked (GlcNAc...) asparagine glycan. The helical transmembrane segment at 1177–1197 threads the bilayer; it reads GTLVLPAAIAFTLYVVVQAFL. Over 1198–1202 the chain is Cytoplasmic; sequence PNVPT. A helical membrane pass occupies residues 1203 to 1223; it reads PTIPLILLALILGLPGILIVV. Residues 1224-1227 lie on the Extracellular side of the membrane; it reads TSRK. A helical transmembrane segment spans residues 1228–1248; it reads IAYVGWMLIYLLSLPIWNFVL. The Cytoplasmic segment spans residues 1249–1609; it reads PLYAYWHMDD…PPGAAPPSFD (361 aa). 2 disordered regions span residues 1354–1381 and 1399–1609; these read PNAMSSSSASQFGPDVSEVSHSKSPSGA and TDAK…PSFD. Polar residues-rich tracts occupy residues 1502-1514 and 1530-1552; these read NVSTEQRYPTVSE and GSASPTPAQQGFNAANSNQQTRP. A compositionally biased stretch (low complexity) spans 1568-1588; it reads AQGVRQVQRGARRSQMPNSAA.

Belongs to the chitin synthase family. Class IV subfamily.

It is found in the cell membrane. The protein resides in the cytoplasmic vesicle membrane. It carries out the reaction [(1-&gt;4)-N-acetyl-beta-D-glucosaminyl](n) + UDP-N-acetyl-alpha-D-glucosamine = [(1-&gt;4)-N-acetyl-beta-D-glucosaminyl](n+1) + UDP + H(+). In terms of biological role, polymerizes chitin, a structural polymer of the cell wall and septum, by transferring the sugar moiety of UDP-GlcNAc to the non-reducing end of the growing chitin polymer. The sequence is that of Chitin synthase 5 from Mycosarcoma maydis (Corn smut fungus).